The primary structure comprises 595 residues: Aspartate--tRNA(Asp/Asn) ligase (595 aa).

Glu-178 contributes to the L-aspartate binding site. The segment at 202-205 (QIFK) is aspartate. Arg-224 serves as a coordination point for L-aspartate. Residues 224-226 (RDE) and Gln-233 each bind ATP. An L-aspartate-binding site is contributed by His-458. Glu-488 is a binding site for ATP. Position 495 (Arg-495) interacts with L-aspartate. An ATP-binding site is contributed by 540–543 (GIDR).

The protein belongs to the class-II aminoacyl-tRNA synthetase family. Type 1 subfamily. Homodimer.

It localises to the cytoplasm. It catalyses the reaction tRNA(Asx) + L-aspartate + ATP = L-aspartyl-tRNA(Asx) + AMP + diphosphate. Aspartyl-tRNA synthetase with relaxed tRNA specificity since it is able to aspartylate not only its cognate tRNA(Asp) but also tRNA(Asn). Reaction proceeds in two steps: L-aspartate is first activated by ATP to form Asp-AMP and then transferred to the acceptor end of tRNA(Asp/Asn). The chain is Aspartate--tRNA(Asp/Asn) ligase from Acaryochloris marina (strain MBIC 11017).